A 128-amino-acid chain; its full sequence is Holo-[acyl-carrier-protein] synthase (128 aa).

2 residues coordinate Mg(2+): Asp-8 and Glu-57.

This sequence belongs to the P-Pant transferase superfamily. AcpS family. Mg(2+) is required as a cofactor.

The protein localises to the cytoplasm. It carries out the reaction apo-[ACP] + CoA = holo-[ACP] + adenosine 3',5'-bisphosphate + H(+). Functionally, transfers the 4'-phosphopantetheine moiety from coenzyme A to a Ser of acyl-carrier-protein. The sequence is that of Holo-[acyl-carrier-protein] synthase from Syntrophus aciditrophicus (strain SB).